Reading from the N-terminus, the 49-residue chain is U-theraphotoxin-Lk2a (49 aa).

Intrachain disulfides connect C4/C17, C8/C41, C22/C24, and C35/C46.

Belongs to the neurotoxin 12 (Hwtx-2) family. 04 (lasiotoxin) subfamily. Expressed by the venom gland.

The protein resides in the secreted. Functionally, toxin that causes irreversible contractile paralysis into adult Aedes aegypti resulting in 100% mortality after 24 hours. The chain is U-theraphotoxin-Lk2a from Lasiodora klugi (Bahia scarlet tarantula).